The chain runs to 312 residues: Olfactory receptor OR51C1 (312 aa).

The Extracellular segment spans residues 1–26 (MGSNITSTSIIFLLTGVPGLEAFHTW). A helical membrane pass occupies residues 27–47 (ISIPFCFLSVTALLGNSLILF). Over 48–66 (ATITQPSLHEPMYYFLSML) the chain is Cytoplasmic. Residues 67–87 (SATDLGLSISTLVTMLSIFWF) traverse the membrane as a helical segment. Residues 88–99 (NVREISFNACLS) are Extracellular-facing. Residues C97 and C179 are joined by a disulfide bond. The chain crosses the membrane as a helical span at residues 100-120 (HMFFIKFFTVMESSVLLAMAF). The Cytoplasmic portion of the chain corresponds to 121–143 (DRFVAVSNPLRYAMILTDSRIAQ). A helical transmembrane segment spans residues 144 to 164 (IGVASVIRGLLMLTPMVALLI). Topologically, residues 165–201 (RLSYCHSQVLHHSYCYHPDVMKLSCTDTRINSAVGLT) are extracellular. Residues 202-222 (AMFSTVGVDLLLILLSYVLII) traverse the membrane as a helical segment. Topologically, residues 223 to 240 (RTVLSVASPEERKETFST) are cytoplasmic. Residues 241–261 (CVSHIVAFAIYYIPLISLSIV) traverse the membrane as a helical segment. At 262–273 (HRFGKQAPAYVH) the chain is on the extracellular side. A helical transmembrane segment spans residues 274–294 (TMIANTYLLISPLMNPVIYSV). The Cytoplasmic segment spans residues 295–312 (KTKQIRRAVIKILHSKET).

The protein belongs to the G-protein coupled receptor 1 family.

The protein resides in the membrane. Its function is as follows. Odorant receptor. The polypeptide is Olfactory receptor OR51C1 (Homo sapiens (Human)).